Here is a 190-residue protein sequence, read N- to C-terminus: Holliday junction branch migration complex subunit RuvA (190 aa).

A domain I region spans residues 1 to 65 (MIGTLSGTVE…DGVSQLYGFA (65 aa)). Positions 66–137 (NREEQNCMRM…LTPQVQKFEL (72 aa)) are domain II. A flexible linker region spans residues 137-141 (LNRFA). The interval 142 to 190 (ATTRTDSEAVAALLSLGYERTAALGALQKVGVCDSTEDAVRRALLELSK) is domain III.

This sequence belongs to the RuvA family. Homotetramer. Forms an RuvA(8)-RuvB(12)-Holliday junction (HJ) complex. HJ DNA is sandwiched between 2 RuvA tetramers; dsDNA enters through RuvA and exits via RuvB. An RuvB hexamer assembles on each DNA strand where it exits the tetramer. Each RuvB hexamer is contacted by two RuvA subunits (via domain III) on 2 adjacent RuvB subunits; this complex drives branch migration. In the full resolvosome a probable DNA-RuvA(4)-RuvB(12)-RuvC(2) complex forms which resolves the HJ.

It localises to the cytoplasm. In terms of biological role, the RuvA-RuvB-RuvC complex processes Holliday junction (HJ) DNA during genetic recombination and DNA repair, while the RuvA-RuvB complex plays an important role in the rescue of blocked DNA replication forks via replication fork reversal (RFR). RuvA specifically binds to HJ cruciform DNA, conferring on it an open structure. The RuvB hexamer acts as an ATP-dependent pump, pulling dsDNA into and through the RuvAB complex. HJ branch migration allows RuvC to scan DNA until it finds its consensus sequence, where it cleaves and resolves the cruciform DNA. This is Holliday junction branch migration complex subunit RuvA from Anaplasma marginale (strain Florida).